The primary structure comprises 1060 residues: Carbamoyl phosphate synthase large chain (1060 aa).

The segment at 1-401 (MPKRTDIRKI…SLLKACRSLE (401 aa)) is carboxyphosphate synthetic domain. ATP-binding residues include R129, R169, G175, G176, R208, I210, E215, G241, I242, H243, Q284, and E298. In terms of domain architecture, ATP-grasp 1 spans 133 to 327 (KQLMEELNQP…IAKLAAKIAV (195 aa)). 3 residues coordinate Mg(2+): Q284, E298, and N300. Residues Q284, E298, and N300 each coordinate Mn(2+). Positions 402 to 546 (IGVDHIKIAD…YSTYAVENES (145 aa)) are oligomerization domain. The tract at residues 547-929 (LISDKASILV…ALYKAFEAAY (383 aa)) is carbamoyl phosphate synthetic domain. The ATP-grasp 2 domain maps to 671–861 (EATLQALNIP…MAQVATKVIL (191 aa)). R707, A746, L748, E752, G777, V778, H779, S780, Q820, and E832 together coordinate ATP. Q820, E832, and N834 together coordinate Mg(2+). Positions 820, 832, and 834 each coordinate Mn(2+). The MGS-like domain occupies 930–1060 (LHMPDYGNIV…SRAFTLKVLD (131 aa)). Positions 930-1060 (LHMPDYGNIV…SRAFTLKVLD (131 aa)) are allosteric domain.

Belongs to the CarB family. In terms of assembly, composed of two chains; the small (or glutamine) chain promotes the hydrolysis of glutamine to ammonia, which is used by the large (or ammonia) chain to synthesize carbamoyl phosphate. Tetramer of heterodimers (alpha,beta)4. Mg(2+) serves as cofactor. The cofactor is Mn(2+).

It carries out the reaction hydrogencarbonate + L-glutamine + 2 ATP + H2O = carbamoyl phosphate + L-glutamate + 2 ADP + phosphate + 2 H(+). The catalysed reaction is hydrogencarbonate + NH4(+) + 2 ATP = carbamoyl phosphate + 2 ADP + phosphate + 2 H(+). The protein operates within amino-acid biosynthesis; L-arginine biosynthesis; carbamoyl phosphate from bicarbonate: step 1/1. It functions in the pathway pyrimidine metabolism; UMP biosynthesis via de novo pathway; (S)-dihydroorotate from bicarbonate: step 1/3. Large subunit of the glutamine-dependent carbamoyl phosphate synthetase (CPSase). CPSase catalyzes the formation of carbamoyl phosphate from the ammonia moiety of glutamine, carbonate, and phosphate donated by ATP, constituting the first step of 2 biosynthetic pathways, one leading to arginine and/or urea and the other to pyrimidine nucleotides. The large subunit (synthetase) binds the substrates ammonia (free or transferred from glutamine from the small subunit), hydrogencarbonate and ATP and carries out an ATP-coupled ligase reaction, activating hydrogencarbonate by forming carboxy phosphate which reacts with ammonia to form carbamoyl phosphate. This chain is Carbamoyl phosphate synthase large chain, found in Streptococcus agalactiae serotype III (strain NEM316).